The primary structure comprises 555 residues: DNA ligase (555 aa).

Glutamate 247 is a binding site for ATP. Lysine 249 (N6-AMP-lysine intermediate) is an active-site residue. Residues arginine 254, arginine 269, glutamate 298, phenylalanine 337, arginine 411, and lysine 417 each coordinate ATP.

Belongs to the ATP-dependent DNA ligase family. Mg(2+) is required as a cofactor.

The enzyme catalyses ATP + (deoxyribonucleotide)n-3'-hydroxyl + 5'-phospho-(deoxyribonucleotide)m = (deoxyribonucleotide)n+m + AMP + diphosphate.. Its function is as follows. DNA ligase that seals nicks in double-stranded DNA during DNA replication, DNA recombination and DNA repair. This Archaeoglobus fulgidus (strain ATCC 49558 / DSM 4304 / JCM 9628 / NBRC 100126 / VC-16) protein is DNA ligase.